A 350-amino-acid chain; its full sequence is S-adenosylmethionine:tRNA ribosyltransferase-isomerase (350 aa).

The protein belongs to the QueA family. Monomer.

The protein resides in the cytoplasm. It carries out the reaction 7-aminomethyl-7-carbaguanosine(34) in tRNA + S-adenosyl-L-methionine = epoxyqueuosine(34) in tRNA + adenine + L-methionine + 2 H(+). It functions in the pathway tRNA modification; tRNA-queuosine biosynthesis. In terms of biological role, transfers and isomerizes the ribose moiety from AdoMet to the 7-aminomethyl group of 7-deazaguanine (preQ1-tRNA) to give epoxyqueuosine (oQ-tRNA). The protein is S-adenosylmethionine:tRNA ribosyltransferase-isomerase of Bacillus cereus (strain B4264).